Consider the following 335-residue polypeptide: Putative peroxisomal biogenesis factor 19 (335 aa).

Disordered stretches follow at residues 14–70 (LETQ…LGND) and 104–124 (YNKD…PSEE). Composition is skewed to low complexity over residues 22–55 (PTTT…PSTI) and 109–119 (NNNSDDSNNGG).

It belongs to the peroxin-19 family.

It localises to the peroxisome. The chain is Putative peroxisomal biogenesis factor 19 (pex19) from Dictyostelium discoideum (Social amoeba).